The sequence spans 739 residues: Catalase-peroxidase (739 aa).

A signal peptide spans 1–23 (MLKKIVTALGMSGMLLAANSAIA). Residues 100 to 221 (WHDAGTYRLA…YAATQMGLIY (122 aa)) constitute a cross-link (tryptophyl-tyrosyl-methioninium (Trp-Tyr) (with M-247)). Histidine 101 (proton acceptor) is an active-site residue. The segment at residues 221 to 247 (YVNPEGPDGKPDIKGAASEIRQAFRAM) is a cross-link (tryptophyl-tyrosyl-methioninium (Tyr-Met) (with W-100)). Heme b is bound at residue histidine 262.

Belongs to the peroxidase family. Peroxidase/catalase subfamily. Homodimer or homotetramer. Heme b serves as cofactor. Formation of the three residue Trp-Tyr-Met cross-link is important for the catalase, but not the peroxidase activity of the enzyme.

The enzyme catalyses H2O2 + AH2 = A + 2 H2O. The catalysed reaction is 2 H2O2 = O2 + 2 H2O. In terms of biological role, bifunctional enzyme with both catalase and broad-spectrum peroxidase activity. The protein is Catalase-peroxidase of Francisella philomiragia subsp. philomiragia (strain ATCC 25017 / CCUG 19701 / FSC 153 / O#319-036).